The primary structure comprises 420 residues: uncharacterized protein (420 aa).

This is an uncharacterized protein from Encephalitozoon cuniculi (strain GB-M1) (Microsporidian parasite).